The chain runs to 272 residues: NH(3)-dependent NAD(+) synthetase (272 aa).

Position 45–52 (45–52) interacts with ATP; the sequence is GISGGQDS. Asp-51 provides a ligand contact to Mg(2+). Residue Arg-138 coordinates deamido-NAD(+). Thr-158 lines the ATP pocket. Glu-163 lines the Mg(2+) pocket. Residues Lys-171 and Asp-178 each coordinate deamido-NAD(+). Residues Lys-187 and Thr-209 each contribute to the ATP site. 258–259 contacts deamido-NAD(+); that stretch reads HK.

Belongs to the NAD synthetase family. As to quaternary structure, homodimer.

The catalysed reaction is deamido-NAD(+) + NH4(+) + ATP = AMP + diphosphate + NAD(+) + H(+). Its pathway is cofactor biosynthesis; NAD(+) biosynthesis; NAD(+) from deamido-NAD(+) (ammonia route): step 1/1. Its function is as follows. Catalyzes the ATP-dependent amidation of deamido-NAD to form NAD. Uses ammonia as a nitrogen source. The sequence is that of NH(3)-dependent NAD(+) synthetase from Bacillus licheniformis (strain ATCC 14580 / DSM 13 / JCM 2505 / CCUG 7422 / NBRC 12200 / NCIMB 9375 / NCTC 10341 / NRRL NRS-1264 / Gibson 46).